A 346-amino-acid chain; its full sequence is D-erythrose-4-phosphate dehydrogenase (346 aa).

Residue 11-12 (RI) participates in NAD(+) binding. Substrate is bound by residues 163–165 (SCT), R209, 222–223 (TK), and R245. The Nucleophile role is filled by C164. N327 contributes to the NAD(+) binding site.

It belongs to the glyceraldehyde-3-phosphate dehydrogenase family. Epd subfamily. As to quaternary structure, homotetramer.

The protein localises to the cytoplasm. It carries out the reaction D-erythrose 4-phosphate + NAD(+) + H2O = 4-phospho-D-erythronate + NADH + 2 H(+). It functions in the pathway cofactor biosynthesis; pyridoxine 5'-phosphate biosynthesis; pyridoxine 5'-phosphate from D-erythrose 4-phosphate: step 1/5. Functionally, catalyzes the NAD-dependent conversion of D-erythrose 4-phosphate to 4-phosphoerythronate. The sequence is that of D-erythrose-4-phosphate dehydrogenase from Vibrio vulnificus (strain CMCP6).